A 394-amino-acid chain; its full sequence is Acetate kinase (394 aa).

Asn-8 provides a ligand contact to Mg(2+). Residue Lys-15 coordinates ATP. Arg-86 contacts substrate. Asp-143 (proton donor/acceptor) is an active-site residue. ATP-binding positions include 201–205, 276–278, and 324–328; these read HLGNG, DCR, and GIGEN. Position 378 (Glu-378) interacts with Mg(2+).

The protein belongs to the acetokinase family. In terms of assembly, homodimer. Mg(2+) serves as cofactor. Requires Mn(2+) as cofactor.

Its subcellular location is the cytoplasm. It catalyses the reaction acetate + ATP = acetyl phosphate + ADP. Its pathway is metabolic intermediate biosynthesis; acetyl-CoA biosynthesis; acetyl-CoA from acetate: step 1/2. Functionally, catalyzes the formation of acetyl phosphate from acetate and ATP. Can also catalyze the reverse reaction. The protein is Acetate kinase of Dichelobacter nodosus (strain VCS1703A).